The following is a 34-amino-acid chain: Protein MgtT (34 aa).

The segment at 1 to 34 (MNGDNPSPNRPLVTVVYKGPDFYDGEKKPPVNRR) is disordered. Basic and acidic residues predominate over residues 24–34 (DGEKKPPVNRR).

In Escherichia coli (strain K12), this protein is Protein MgtT.